The chain runs to 111 residues: Parvalbumin alpha (111 aa).

Thr-1 bears the N-acetylthreonine; in form C2 mark. EF-hand domains lie at 40 to 75 and 79 to 111; these read KPDDTLKEVFGILDQDKSGYIEEEELKFVLKGFAAG and LTANETKALLKAGDQDGDDKIGVDEFTNLVKAA. The Ca(2+) site is built by Asp-53, Asp-55, Ser-57, Tyr-59, Glu-61, Glu-64, Asp-92, Asp-94, Asp-96, Lys-98, and Glu-103.

The protein belongs to the parvalbumin family. Acetylation of Thr-1 converts C1 to C2.

Functionally, in muscle, parvalbumin is thought to be involved in relaxation after contraction. It binds two calcium ions. This Latimeria chalumnae (Coelacanth) protein is Parvalbumin alpha.